We begin with the raw amino-acid sequence, 85 residues long: Large ribosomal subunit protein bL27 (85 aa).

Belongs to the bacterial ribosomal protein bL27 family.

The protein is Large ribosomal subunit protein bL27 of Campylobacter concisus (strain 13826).